The following is a 199-amino-acid chain: Histone deacetylase complex subunit SAP25 (199 aa).

Polar residues-rich tracts occupy residues 151 to 163 (QMSQ…SSSA) and 184 to 199 (QGAD…THCP). The tract at residues 151–199 (QMSQGEPRPSSSAVGPPDHTSDPPSPCGSPSSSQGADLSLPQTPDTHCP) is disordered.

May be a component of the mSIN3A corepressor complex. Interacts with SIN3A. Interacts with HDAC2.

It localises to the nucleus. The protein resides in the cytoplasm. Its function is as follows. Involved in the transcriptional repression mediated by the mSIN3A but not the N-CoR corepressor complex. The sequence is that of Histone deacetylase complex subunit SAP25 (SAP25) from Homo sapiens (Human).